The sequence spans 787 residues: Disintegrin and metalloproteinase domain-containing protein 32 (787 aa).

Positions 1-16 (MFRLWLLLAGLCGLLA) are cleaved as a signal peptide. S17 carries the post-translational modification Phosphoserine. A propeptide spanning residues 17 to 174 (SRPGFQNSLL…PMDDNIFISE (158 aa)) is cleaved from the precursor. N-linked (GlcNAc...) asparagine glycans are attached at residues N39 and N125. Over 175-682 (KSEPAVPDLF…ERASGKTENT (508 aa)) the chain is Extracellular. The Peptidase M12B domain occupies 186–383 (LYLEMHIVVD…VGVKCLQNKP (198 aa)). Disulfide bonds link C295/C378, C337/C362, C339/C344, and C450/C471. Residues 391–479 (KPVCGNGRLE…ECGPDITLIN (89 aa)) enclose the Disintegrin domain. 2 N-linked (GlcNAc...) asparagine glycosylation sites follow: N465 and N598. Positions 622–654 (SAHVCSQQCSGHGVCDSRNKCHCSPGYKPPNCQ) constitute an EGF-like domain. Cystine bridges form between C626–C636, C630–C642, and C644–C653. A helical transmembrane segment spans residues 683 to 703 (WLLGFLIALPILIVTTAIVLA). Topologically, residues 704–787 (RKQLKKWFAK…DSTQTQSSSN (84 aa)) are cytoplasmic. A disordered region spans residues 715–787 (EEFPSSESKS…DSTQTQSSSN (73 aa)). Polar residues predominate over residues 728 to 749 (TQTYASQSSSEGSTQTYASQTR). Residues 771–787 (TSRSKSQDSTQTQSSSN) show a composition bias toward low complexity.

Testis specific.

The protein localises to the membrane. May play a role in sperm development and fertilization This is a non-catalytic metalloprotease-like protein. In Homo sapiens (Human), this protein is Disintegrin and metalloproteinase domain-containing protein 32 (ADAM32).